The sequence spans 240 residues: Sialidase 85-1.2 (240 aa).

Acidic residues predominate over residues 127 to 142; the sequence is DDDDGGDDDDEEDSQE. Disordered regions lie at residues 127–158 and 221–240; these read DDDD…GKKP and HRGG…QRDA. A compositionally biased stretch (basic and acidic residues) spans 144 to 155; that stretch reads SSPKESSPEKIG.

This sequence belongs to the glycosyl hydrolase 33 family.

It carries out the reaction Hydrolysis of alpha-(2-&gt;3)-, alpha-(2-&gt;6)-, alpha-(2-&gt;8)- glycosidic linkages of terminal sialic acid residues in oligosaccharides, glycoproteins, glycolipids, colominic acid and synthetic substrates.. Functionally, developmentally regulated neuraminidase implicated in parasite invasion of cells. May contribute to the pathology during T.cruzi infection by cleaving sialic acid from cells of the immune system. The protein is Sialidase 85-1.2 (SA85-1.2) of Trypanosoma cruzi.